The chain runs to 160 residues: Ureidoglycolate lyase (160 aa).

Belongs to the ureidoglycolate lyase family. As to quaternary structure, homodimer. It depends on Ni(2+) as a cofactor.

It carries out the reaction (S)-ureidoglycolate = urea + glyoxylate. It functions in the pathway nitrogen metabolism; (S)-allantoin degradation. In terms of biological role, catalyzes the catabolism of the allantoin degradation intermediate (S)-ureidoglycolate, generating urea and glyoxylate. Involved in the anaerobic utilization of allantoin as sole nitrogen source. Reinforces the induction of genes involved in the degradation of allantoin and glyoxylate by producing glyoxylate. In Escherichia coli O6:H1 (strain CFT073 / ATCC 700928 / UPEC), this protein is Ureidoglycolate lyase.